The following is a 418-amino-acid chain: UDP-N-acetylglucosamine 1-carboxyvinyltransferase (418 aa).

22–23 lines the phosphoenolpyruvate pocket; the sequence is KN. Arg93 contributes to the UDP-N-acetyl-alpha-D-glucosamine binding site. The active-site Proton donor is the Cys117. The residue at position 117 (Cys117) is a 2-(S-cysteinyl)pyruvic acid O-phosphothioketal. UDP-N-acetyl-alpha-D-glucosamine-binding residues include Asp305 and Val327.

This sequence belongs to the EPSP synthase family. MurA subfamily.

It is found in the cytoplasm. It catalyses the reaction phosphoenolpyruvate + UDP-N-acetyl-alpha-D-glucosamine = UDP-N-acetyl-3-O-(1-carboxyvinyl)-alpha-D-glucosamine + phosphate. Its pathway is cell wall biogenesis; peptidoglycan biosynthesis. Its function is as follows. Cell wall formation. Adds enolpyruvyl to UDP-N-acetylglucosamine. This chain is UDP-N-acetylglucosamine 1-carboxyvinyltransferase, found in Alkalilimnicola ehrlichii (strain ATCC BAA-1101 / DSM 17681 / MLHE-1).